Reading from the N-terminus, the 207-residue chain is Small ribosomal subunit protein uS4 (207 aa).

Positions 31 to 55 are disordered; sequence KCKLDSKPGQHGRTSGARTSDYGTQ. The segment covering 42-53 has biased composition (polar residues); sequence GRTSGARTSDYG. The S4 RNA-binding domain occupies 97 to 160; it reads SRLDNVVYRM…KKQARIIEAL (64 aa).

It belongs to the universal ribosomal protein uS4 family. In terms of assembly, part of the 30S ribosomal subunit. Contacts protein S5. The interaction surface between S4 and S5 is involved in control of translational fidelity.

Its function is as follows. One of the primary rRNA binding proteins, it binds directly to 16S rRNA where it nucleates assembly of the body of the 30S subunit. In terms of biological role, with S5 and S12 plays an important role in translational accuracy. This is Small ribosomal subunit protein uS4 from Burkholderia multivorans (strain ATCC 17616 / 249).